The primary structure comprises 505 residues: Exodeoxyribonuclease 7 large subunit (505 aa).

Residues 466-505 (SGDRDAVIDGEGGPAPAPTAPAPKPRPKPAAPPAGQGDLF) form a disordered region. The segment covering 480–497 (APAPTAPAPKPRPKPAAP) has biased composition (pro residues).

It belongs to the XseA family. As to quaternary structure, heterooligomer composed of large and small subunits.

Its subcellular location is the cytoplasm. It catalyses the reaction Exonucleolytic cleavage in either 5'- to 3'- or 3'- to 5'-direction to yield nucleoside 5'-phosphates.. Its function is as follows. Bidirectionally degrades single-stranded DNA into large acid-insoluble oligonucleotides, which are then degraded further into small acid-soluble oligonucleotides. This Caulobacter vibrioides (strain NA1000 / CB15N) (Caulobacter crescentus) protein is Exodeoxyribonuclease 7 large subunit.